A 124-amino-acid polypeptide reads, in one-letter code: Cysteine-rich DPF motif domain-containing protein 1 (124 aa).

Residues 105–124 are disordered; that stretch reads MDKRKPQSKCLTRKKKDSRT. Residues 115-124 show a composition bias toward basic residues; it reads LTRKKKDSRT.

It belongs to the CDPF1 family.

This chain is Cysteine-rich DPF motif domain-containing protein 1 (CDPF1), found in Gallus gallus (Chicken).